We begin with the raw amino-acid sequence, 265 residues long: Putative hydro-lyase PA2116 (265 aa).

Belongs to the D-glutamate cyclase family.

The chain is Putative hydro-lyase PA2116 from Pseudomonas aeruginosa (strain ATCC 15692 / DSM 22644 / CIP 104116 / JCM 14847 / LMG 12228 / 1C / PRS 101 / PAO1).